A 568-amino-acid polypeptide reads, in one-letter code: CTP synthase (568 aa).

The amidoligase domain stretch occupies residues 1 to 276 (MPQARTIKHV…DAYLVRRLGL (276 aa)). S18 contacts CTP. Position 18 (S18) interacts with UTP. Residues 19–24 (SLGKGL) and D76 each bind ATP. 2 residues coordinate Mg(2+): D76 and E150. CTP is bound by residues 157–159 (DIE), 197–202 (KTKPTQ), and K233. UTP-binding positions include 197–202 (KTKPTQ) and K233. Residues 301 to 550 (RIALVGKYVD…VNAALEYRAA (250 aa)) form the Glutamine amidotransferase type-1 domain. G364 is a binding site for L-glutamine. Residue C391 is the Nucleophile; for glutamine hydrolysis of the active site. Residues 392 to 395 (LGLQ), E415, and R476 contribute to the L-glutamine site. Active-site residues include H523 and E525.

It belongs to the CTP synthase family. Homotetramer.

It carries out the reaction UTP + L-glutamine + ATP + H2O = CTP + L-glutamate + ADP + phosphate + 2 H(+). It catalyses the reaction L-glutamine + H2O = L-glutamate + NH4(+). The catalysed reaction is UTP + NH4(+) + ATP = CTP + ADP + phosphate + 2 H(+). Its pathway is pyrimidine metabolism; CTP biosynthesis via de novo pathway; CTP from UDP: step 2/2. Its activity is regulated as follows. Allosterically activated by GTP, when glutamine is the substrate; GTP has no effect on the reaction when ammonia is the substrate. The allosteric effector GTP functions by stabilizing the protein conformation that binds the tetrahedral intermediate(s) formed during glutamine hydrolysis. Inhibited by the product CTP, via allosteric rather than competitive inhibition. In terms of biological role, catalyzes the ATP-dependent amination of UTP to CTP with either L-glutamine or ammonia as the source of nitrogen. Regulates intracellular CTP levels through interactions with the four ribonucleotide triphosphates. The sequence is that of CTP synthase from Saccharopolyspora erythraea (strain ATCC 11635 / DSM 40517 / JCM 4748 / NBRC 13426 / NCIMB 8594 / NRRL 2338).